We begin with the raw amino-acid sequence, 215 residues long: Probable transaldolase (215 aa).

K83 (schiff-base intermediate with substrate) is an active-site residue.

Belongs to the transaldolase family. Type 3B subfamily.

The protein resides in the cytoplasm. The enzyme catalyses D-sedoheptulose 7-phosphate + D-glyceraldehyde 3-phosphate = D-erythrose 4-phosphate + beta-D-fructose 6-phosphate. The protein operates within carbohydrate degradation; pentose phosphate pathway; D-glyceraldehyde 3-phosphate and beta-D-fructose 6-phosphate from D-ribose 5-phosphate and D-xylulose 5-phosphate (non-oxidative stage): step 2/3. Its function is as follows. Transaldolase is important for the balance of metabolites in the pentose-phosphate pathway. This is Probable transaldolase from Bdellovibrio bacteriovorus (strain ATCC 15356 / DSM 50701 / NCIMB 9529 / HD100).